A 657-amino-acid polypeptide reads, in one-letter code: Glycogen debranching enzyme (657 aa).

Residue Asp336 is the Nucleophile of the active site. The active-site Proton donor is Glu371. The tract at residues 460-479 (ANGEENRDGTNNNYSNNHGK) is disordered.

The protein belongs to the glycosyl hydrolase 13 family.

The enzyme catalyses Hydrolysis of (1-&gt;6)-alpha-D-glucosidic linkages to branches with degrees of polymerization of three or four glucose residues in limit dextrin.. It participates in glycan degradation; glycogen degradation. In terms of biological role, removes maltotriose and maltotetraose chains that are attached by 1,6-alpha-linkage to the limit dextrin main chain, generating a debranched limit dextrin. This chain is Glycogen debranching enzyme, found in Escherichia coli O127:H6 (strain E2348/69 / EPEC).